The sequence spans 675 residues: Zinc finger CCCH domain-containing protein 65 (675 aa).

Positions 294–320 (TFSNEAKMDPGTSIKKRSAPSKDAKAR) are disordered. Basic residues predominate over residues 307 to 320 (IKKRSAPSKDAKAR). Positions 314-342 (SKDAKARKRAKARIKRAQERIALGVKKLK) form a coiled coil. 3 consecutive C3H1-type zinc fingers follow at residues 350–377 (PKPI…HDTI), 384–406 (PCCY…HDLS), and 409–432 (PCNN…HKGT). 2 disordered regions span residues 487 to 572 (LKPS…LPLG) and 586 to 612 (EQKT…SHIQ). The segment covering 490–504 (SSHSNQRNSSDASSS) has biased composition (low complexity). Polar residues predominate over residues 543-567 (KASSASKPNTDNSDSQTLKQSQQGS). Residues 586-595 (EQKTLNREPQ) show a composition bias toward basic and acidic residues. A compositionally biased stretch (polar residues) spans 597–612 (PASSKNLKTTPSSHIQ).

Its function is as follows. Possesses RNA-binding and ribonuclease activities in vitro. The sequence is that of Zinc finger CCCH domain-containing protein 65 (EMB1789) from Arabidopsis thaliana (Mouse-ear cress).